The following is a 358-amino-acid chain: D-alanine--D-alanine ligase (358 aa).

The ATP-grasp domain occupies 136-341; that stretch reads KYILQAAGVP…YGDLIEELIQ (206 aa). 169 to 224 is an ATP binding site; the sequence is EGSLLYPMFVKPANMGSSVGISKAENREELQNALALAYQYDSRAIVEQGIEAREIE. Positions 295, 308, and 310 each coordinate Mg(2+).

The protein belongs to the D-alanine--D-alanine ligase family. The cofactor is Mg(2+). Requires Mn(2+) as cofactor.

The protein localises to the cytoplasm. It catalyses the reaction 2 D-alanine + ATP = D-alanyl-D-alanine + ADP + phosphate + H(+). The protein operates within cell wall biogenesis; peptidoglycan biosynthesis. Cell wall formation. The sequence is that of D-alanine--D-alanine ligase from Enterococcus hirae (strain ATCC 9790 / DSM 20160 / JCM 8729 / LMG 6399 / NBRC 3181 / NCIMB 6459 / NCDO 1258 / NCTC 12367 / WDCM 00089 / R).